We begin with the raw amino-acid sequence, 1254 residues long: Structural polyprotein (1254 aa).

Residues leucine 43–lysine 77 are host transcription inhibition. The interval threonine 60–glutamate 112 is disordered. The Nuclear localization signal motif lies at glutamine 70 to proline 108. The segment covering lysine 84–arginine 110 has biased composition (basic residues). The segment at glutamine 95 to isoleucine 123 is binding to the viral RNA. Positions proline 108 to cysteine 122 are ribosome-binding. An intrachain disulfide couples cysteine 122 to cysteine 137. In terms of domain architecture, Peptidase S3 spans cysteine 122–tryptophan 270. Catalysis depends on histidine 148, which acts as the Charge relay system. The short motif at isoleucine 153–tyrosine 163 is the Nuclear export signal element. The segment at lysine 164–tyrosine 169 is interaction with spike glycoprotein E2. Aspartate 170 serves as the catalytic Charge relay system. The dimerization of the capsid protein stretch occupies residues proline 192–alanine 202. The active-site Charge relay system is serine 222. Positions aspartate 228–arginine 232 are dimerization of the capsid protein. Topologically, residues tryptophan 270–glycine 694 are extracellular. A functions as an uncleaved signal peptide for the precursor of protein E3/E2 region spans residues serine 271 to threonine 282. Disulfide bonds link cysteine 277-cysteine 286, cysteine 291-cysteine 295, and cysteine 294-cysteine 326. Asparagine 281 carries an N-linked (GlcNAc...) asparagine; by host glycan. The N-linked (GlcNAc...) asparagine; by host glycan is linked to asparagine 328. Cystine bridges form between cysteine 353–cysteine 459, cysteine 356–cysteine 362, cysteine 425–cysteine 439, cysteine 487–cysteine 599, cysteine 535–cysteine 559, and cysteine 537–cysteine 554. Interaction with host Mxra8 receptor regions lie at residues tyrosine 360–tyrosine 363 and histidine 396–histidine 398. An interaction with host Mxra8 receptor region spans residues threonine 518–asparagine 521. A glycan (N-linked (GlcNAc...) asparagine; by host) is linked at asparagine 534. The tract at residues threonine 550 to isoleucine 556 is interaction with host Mxra8 receptor. A glycan (N-linked (GlcNAc...) asparagine; by host) is linked at asparagine 596. A helical membrane pass occupies residues leucine 695 to leucine 715. The Cytoplasmic segment spans residues alanine 716 to alanine 756. The S-palmitoyl cysteine; by host moiety is linked to residue cysteine 719. The interval threonine 724–lysine 728 is interaction with the capsid protein. Residues cysteine 729 and cysteine 750 are each lipidated (S-palmitoyl cysteine; by host). Positions cysteine 729 to residue 749 are transient transmembrane before p62-6K protein processing. Cysteine 729 and cysteine 750 are joined by a disulfide. Topologically, residues alanine 757–lysine 771 are extracellular. A helical membrane pass occupies residues threonine 772–isoleucine 792. Residue lysine 793 is a topological domain, cytoplasmic. A helical transmembrane segment spans residues serine 794–alanine 814. Residues lysine 815–serine 1231 lie on the Extracellular side of the membrane. Intrachain disulfides connect cysteine 865-cysteine 930, cysteine 878-cysteine 910, cysteine 879-cysteine 912, and cysteine 884-cysteine 894. An E1 fusion peptide loop region spans residues valine 900–threonine 917. Asparagine 957 is a glycosylation site (N-linked (GlcNAc...) asparagine; by host). 4 cysteine pairs are disulfide-bonded: cysteine 1075/cysteine 1087, cysteine 1117/cysteine 1192, cysteine 1122/cysteine 1196, and cysteine 1144/cysteine 1186. The helical transmembrane segment at glycine 1232 to methionine 1252 threads the bilayer. A lipid anchor (S-palmitoyl cysteine; by host) is attached at cysteine 1249. Residue cysteine 1249 is the site of S-stearoyl cysteine; by host attachment. Residues arginine 1253 to arginine 1254 lie on the Cytoplasmic side of the membrane.

As to quaternary structure, homodimer. Homomultimer. Interacts with host karyopherin KPNA4; this interaction allows the nuclear import of the viral capsid protein. Interacts with spike glycoprotein E2. Interacts with host IRAK1; the interaction leads to inhibition of IRAK1-dependent signaling. In terms of assembly, the precursor of protein E3/E2 and E1 form a heterodimer shortly after synthesis. The precursor of protein E3/E2 and E1 form a heterodimer shortly after synthesis. Processing of the precursor of protein E3/E2 into E2 and E3 results in a heterodimer of the spike glycoproteins E2 and E1. Spike at virion surface are constituted of a trimer of E2-E1 heterodimers. After target cell attachment and endocytosis, E1 change conformation to form homotrimers. Interacts with 6K protein. As to quaternary structure, interacts with spike glycoprotein E1. Processing of the precursor of protein E3/E2 into E2 and E3 results in a heterodimer of the spike glycoproteins E2 and E1. Spike at virion surface are constituted of a trimer of E2-E1 heterodimers. Interacts with 6K protein. Interacts with host MXRA8; this interaction mediates virus entry. In terms of processing, structural polyprotein: Specific enzymatic cleavages in vivo yield mature proteins. Capsid protein is auto-cleaved during polyprotein translation, unmasking a signal peptide at the N-terminus of the precursor of E3/E2. The remaining polyprotein is then targeted to the host endoplasmic reticulum, where host signal peptidase cleaves it into pE2, 6K and E1 proteins. pE2 is further processed to mature E3 and E2 by host furin in trans-Golgi vesicle. Post-translationally, palmitoylated via thioester bonds. These palmitoylations may induce disruption of the C-terminus transmembrane. This would result in the reorientation of E2 C-terminus from lumenal to cytoplasmic side. N-glycosylated. In terms of processing, palmitoylated via thioester bonds.

It localises to the virion. The protein resides in the host cytoplasm. The protein localises to the host cell membrane. Its subcellular location is the host nucleus. It is found in the virion membrane. It localises to the host Golgi apparatus. The protein resides in the host trans-Golgi network. The protein localises to the host endoplasmic reticulum. It catalyses the reaction Autocatalytic release of the core protein from the N-terminus of the togavirus structural polyprotein by hydrolysis of a -Trp-|-Ser- bond.. Functionally, forms an icosahedral capsid with a T=4 symmetry composed of 240 copies of the capsid protein surrounded by a lipid membrane through which penetrate 80 spikes composed of trimers of E1-E2 heterodimers. The capsid protein binds to the viral RNA genome at a site adjacent to a ribosome binding site for viral genome translation following genome release. Possesses a protease activity that results in its autocatalytic cleavage from the nascent structural protein. Following its self-cleavage, the capsid protein transiently associates with ribosomes, and within several minutes the protein binds to viral RNA and rapidly assembles into icosahedric core particles. The resulting nucleocapsid eventually associates with the cytoplasmic domain of the spike glycoprotein E2 at the cell membrane, leading to budding and formation of mature virions. In case of infection, new virions attach to target cells and after clathrin-mediated endocytosis their membrane fuses with the host endosomal membrane. This leads to the release of the nucleocapsid into the cytoplasm, followed by an uncoating event necessary for the genomic RNA to become accessible. The uncoating might be triggered by the interaction of capsid proteins with ribosomes. Binding of ribosomes would release the genomic RNA since the same region is genomic RNA-binding and ribosome-binding. Specifically inhibits interleukin-1 receptor-associated kinase 1/IRAK1-dependent signaling during viral entry, representing a means by which the alphaviruses may evade innate immune detection and activation prior to viral gene expression. Its function is as follows. Provides the signal sequence for the translocation of the precursor of protein E3/E2 to the host endoplasmic reticulum. Furin-cleaved E3 remains associated with spike glycoprotein E1 and mediates pH protection of the latter during the transport via the secretory pathway. After virion release from the host cell, the assembly protein E3 is gradually released in the extracellular space. Plays a role in viral attachment to target host cell, by binding to the cell receptor MXRA8. The host LDLR may also act as a cell receptor for viral entry. Synthesized as a p62 precursor which is processed by furin at the cell membrane just before virion budding, giving rise to E2-E1 heterodimer. The p62-E1 heterodimer is stable, whereas E2-E1 is unstable and dissociate at low pH. p62 is processed at the last step, presumably to avoid E1 fusion activation before its final export to cell surface. E2 C-terminus contains a transitory transmembrane that would be disrupted by palmitoylation, resulting in reorientation of the C-terminal tail from lumenal to cytoplasmic side. This step is critical since E2 C-terminus is involved in budding by interacting with capsid proteins. This release of E2 C-terminus in cytoplasm occurs lately in protein export, and precludes premature assembly of particles at the endoplasmic reticulum membrane. In terms of biological role, acts as a viroporin that participates in virus glycoprotein processing and transport to the plasma membrane, cell permeabilization and budding of viral particles. The cation channel is permeable to Na(+)&gt;K(+)&gt;Ca(2+) in vitro. Disrupts the calcium homeostasis of the cell, probably at the endoplasmic reticulum level. This leads to cytoplasmic calcium elevation. Because of its lipophilic properties, the 6K protein is postulated to influence the selection of lipids that interact with the transmembrane domains of the glycoproteins, which, in turn, affects the deformability of the bilayer required for the extreme curvature that occurs as budding proceeds. Present in low amount in virions, about 3% compared to viral glycoproteins. Functionally, class II viral fusion protein. Fusion activity is inactive as long as E1 is bound to E2 in mature virion. After virus attachment to target cell via host MXRA8 and endocytosis, acidification of the endosome induce dissociation of E1/E2 heterodimer and concomitant trimerization of the E1 subunits. This E1 trimer is fusion active, and promotes release of viral nucleocapsid in cytoplasm after endosome and viral membrane fusion. Efficient fusion requires the presence of cholesterol and sphingolipid in the target membrane. The polypeptide is Structural polyprotein (Ross river virus (strain NB5092) (RRV)).